The primary structure comprises 536 residues: Lysosomal acid glucosylceramidase (536 aa).

Residues 1–39 (MEFSSPSREECPKPLSRVSIMAGSLTGLLLLQAVSWASG) form the signal peptide. 2 disulfides stabilise this stretch: Cys-43–Cys-55 and Cys-57–Cys-62. N-linked (GlcNAc...) asparagine glycosylation is found at Asn-58, Asn-98, and Asn-185. Residue Glu-274 is the Proton donor of the active site. A glycan (N-linked (GlcNAc...) asparagine) is linked at Asn-309. The active-site Nucleophile is the Glu-379. Asn-501 is a glycosylation site (N-linked (GlcNAc...) asparagine).

Belongs to the glycosyl hydrolase 30 family. As to quaternary structure, interacts with saposin-C. Interacts with SCARB2. Interacts with TCP1. May interacts with SNCA; this interaction may inhibit the glucosylceramidase activity. Interacts with GRN; this interaction prevents aggregation of GBA1-SCARB2 complex via interaction with HSPA1A upon stress.

The protein localises to the lysosome membrane. It carries out the reaction a beta-D-glucosyl-(1&lt;-&gt;1')-N-acylsphing-4-enine + H2O = an N-acylsphing-4-enine + D-glucose. The enzyme catalyses a beta-D-galactosyl-(1&lt;-&gt;1')-N-acylsphing-4-enine + H2O = an N-acylsphing-4-enine + D-galactose. It catalyses the reaction cholesteryl 3-beta-D-glucoside + H2O = cholesterol + D-glucose. The catalysed reaction is a beta-D-glucosyl-(1&lt;-&gt;1')-N-acylsphing-4-enine + cholesterol = cholesteryl 3-beta-D-glucoside + an N-acylsphing-4-enine. It carries out the reaction beta-D-glucosyl-N-(9Z-octadecenoyl)-sphing-4E-enine + cholesterol = N-(9Z-octadecenoyl)-sphing-4-enine + cholesteryl 3-beta-D-glucoside. The enzyme catalyses beta-D-glucosyl-(1&lt;-&gt;1')-N-hexadecanoylsphing-4-enine + cholesterol = cholesteryl 3-beta-D-glucoside + N-hexadecanoylsphing-4-enine. It catalyses the reaction beta-D-glucosyl-N-octanoylsphing-4E-enine + cholesterol = N-octanoylsphing-4-enine + cholesteryl 3-beta-D-glucoside. The catalysed reaction is beta-D-glucosyl-N-dodecanoylsphing-4-enine + cholesterol = N-dodecanoylsphing-4-enine + cholesteryl 3-beta-D-glucoside. It carries out the reaction beta-D-glucosyl-(1&lt;-&gt;1)-N-octadecanoylsphing-4-enine + cholesterol = N-octadecanoylsphing-4-enine + cholesteryl 3-beta-D-glucoside. The enzyme catalyses beta-D-glucosyl-(1&lt;-&gt;1')-N-(15Z-tetracosenoyl)-sphing-4-enine + cholesterol = N-(15Z-tetracosenoyl)-sphing-4-enine + cholesteryl 3-beta-D-glucoside. It catalyses the reaction a beta-D-galactosyl-(1&lt;-&gt;1')-N-acylsphing-4-enine + cholesterol = cholesteryl 3-beta-D-galactoside + an N-acylsphing-4-enine. The catalysed reaction is 1-(beta-D-galactosyl)-N-dodecanoylsphing-4-enine + cholesterol = cholesteryl 3-beta-D-galactoside + N-dodecanoylsphing-4-enine. It carries out the reaction a beta-D-xylosyl-(1&lt;-&gt;1')-N-acylsphing-4-enine + cholesterol = cholesteryl 3-beta-D-xyloside + an N-acylsphing-4-enine. The enzyme catalyses beta-D-xylosyl-(1&lt;-&gt;1')-N-(9Z-octadecenoyl)-sphing-4-enine + cholesterol = cholesteryl 3-beta-D-xyloside + N-(9Z-octadecenoyl)-sphing-4-enine. It participates in steroid metabolism; cholesterol metabolism. The protein operates within sphingolipid metabolism. Its activity is regulated as follows. Synergistically activated by saposin-A and saposin-C, two saposin peptides produced by proteolytic processing of prosaposin/PSAP. Saposin-C activates GBA1 through its recruitment to membranes. The membrane structure and composition in anionic phospholipids are also important for the activation. Activated by PKC in the salvage pathway of ceramide formation. Inhibited by conduritol B epoxide/CBE. Its function is as follows. Glucosylceramidase that catalyzes, within the lysosomal compartment, the hydrolysis of glucosylceramides/GlcCers (such as beta-D-glucosyl-(1&lt;-&gt;1')-N-acylsphing-4-enine) into free ceramides (such as N-acylsphing-4-enine) and glucose. Plays a central role in the degradation of complex lipids and the turnover of cellular membranes. Through the production of ceramides, participates in the PKC-activated salvage pathway of ceramide formation. Catalyzes the glucosylation of cholesterol, through a transglucosylation reaction where glucose is transferred from GlcCer to cholesterol. GlcCer containing mono-unsaturated fatty acids (such as beta-D-glucosyl-N-(9Z-octadecenoyl)-sphing-4-enine) are preferred as glucose donors for cholesterol glucosylation when compared with GlcCer containing same chain length of saturated fatty acids (such as beta-D-glucosyl-N-octadecanoyl-sphing-4-enine). Under specific conditions, may alternatively catalyze the reverse reaction, transferring glucose from cholesteryl 3-beta-D-glucoside to ceramide. Can also hydrolyze cholesteryl 3-beta-D-glucoside producing glucose and cholesterol. Catalyzes the hydrolysis of galactosylceramides/GalCers (such as beta-D-galactosyl-(1&lt;-&gt;1')-N-acylsphing-4-enine), as well as the transfer of galactose between GalCers and cholesterol in vitro, but with lower activity than with GlcCers. Contrary to GlcCer and GalCer, xylosylceramide/XylCer (such as beta-D-xyosyl-(1&lt;-&gt;1')-N-acylsphing-4-enine) is not a good substrate for hydrolysis, however it is a good xylose donor for transxylosylation activity to form cholesteryl 3-beta-D-xyloside. The sequence is that of Lysosomal acid glucosylceramidase from Homo sapiens (Human).